A 575-amino-acid polypeptide reads, in one-letter code: Stage VI sporulation protein D (575 aa).

The disordered stretch occupies residues 159-502; sequence EELSEPPAHS…ETKEPQTKES (344 aa). Residues 200–212 show a composition bias toward basic and acidic residues; it reads GLREELETEKAES. Acidic residues-rich tracts occupy residues 229–238 and 249–264; these read KEEEESEELA and ETEE…EIEI. Basic and acidic residues-rich tracts occupy residues 266–275, 283–302, and 310–325; these read EIVKAKKETA, DVRE…HVGA, and AELH…KEET. Residues 438–448 show a composition bias toward acidic residues; that stretch reads EEEEQEEESFE. The segment covering 449–464 has biased composition (basic and acidic residues); it reads IEVRKTPSAEEPKEET. Residues 465-474 show a composition bias toward polar residues; sequence PFQSFQLPES. Residues 493–502 are compositionally biased toward basic and acidic residues; that stretch reads ETKEPQTKES. One can recognise a LysM domain in the interval 523–567; it reads KICIVQQEDTIERLCERYEITSQQLIRMNSLALDDELKAGQILYI.

Required for assembly of a normal spore coat. May be a component of the innermost layer of the spore coat that aids in its adherence to the prespore. This chain is Stage VI sporulation protein D (spoVID), found in Bacillus subtilis (strain 168).